Here is a 447-residue protein sequence, read N- to C-terminus: Cysteine--tRNA ligase (447 aa).

Residue Cys-28 participates in Zn(2+) binding. A 'HIGH' region motif is present at residues 30-40 (PTVYNYIHVGN). Residues Cys-211, His-236, and Glu-240 each contribute to the Zn(2+) site. The short motif at 268–272 (KMSKS) is the 'KMSKS' region element. Lys-271 provides a ligand contact to ATP.

The protein belongs to the class-I aminoacyl-tRNA synthetase family. As to quaternary structure, monomer. Zn(2+) serves as cofactor.

The protein resides in the cytoplasm. The catalysed reaction is tRNA(Cys) + L-cysteine + ATP = L-cysteinyl-tRNA(Cys) + AMP + diphosphate. In Streptococcus pneumoniae (strain ATCC BAA-255 / R6), this protein is Cysteine--tRNA ligase.